The following is a 334-amino-acid chain: Biotin synthase (334 aa).

Positions 55 to 280 constitute a Radical SAM core domain; the sequence is EEIEVEGIIS…HTMLRFAGGR (226 aa). Positions 70, 74, and 77 each coordinate [4Fe-4S] cluster. C113, C205, and R275 together coordinate [2Fe-2S] cluster.

The protein belongs to the radical SAM superfamily. Biotin synthase family. In terms of assembly, homodimer. [4Fe-4S] cluster serves as cofactor. [2Fe-2S] cluster is required as a cofactor.

The catalysed reaction is (4R,5S)-dethiobiotin + (sulfur carrier)-SH + 2 reduced [2Fe-2S]-[ferredoxin] + 2 S-adenosyl-L-methionine = (sulfur carrier)-H + biotin + 2 5'-deoxyadenosine + 2 L-methionine + 2 oxidized [2Fe-2S]-[ferredoxin]. It participates in cofactor biosynthesis; biotin biosynthesis; biotin from 7,8-diaminononanoate: step 2/2. Its function is as follows. Catalyzes the conversion of dethiobiotin (DTB) to biotin by the insertion of a sulfur atom into dethiobiotin via a radical-based mechanism. The chain is Biotin synthase from Corynebacterium glutamicum (strain R).